A 627-amino-acid polypeptide reads, in one-letter code: Mitochondrial distribution and morphology protein 34 (627 aa).

The SMP-LTD domain occupies 1–195 (MAFNFNWSPL…LPAIIHRLSL (195 aa)). Disordered stretches follow at residues 209 to 230 (SAQVTNPSLDGPGLDPLLNPPQ), 332 to 470 (ASLA…RTSP), 486 to 557 (LQRQ…SRPS), and 586 to 627 (RIQD…AYRH). 2 stretches are compositionally biased toward low complexity: residues 215–225 (PSLDGPGLDPL) and 332–341 (ASLASSSHSR). Residues 360–372 (RHSKAHARKRKKR) show a composition bias toward basic residues. The segment covering 373–384 (VVDLRRRPKSAD) has biased composition (basic and acidic residues). A compositionally biased stretch (low complexity) spans 390–412 (SGESAYTETSTTTSAVSVFSGST). A compositionally biased stretch (basic and acidic residues) spans 436-451 (TLRDRIAARDDAERNS). Positions 528 to 557 (PNASNNYTSSSSPSARDPQQQQPQQLSRPS) are enriched in low complexity.

It belongs to the MDM34 family. Component of the ER-mitochondria encounter structure (ERMES) or MDM complex, composed of MMM1, MDM10, MDM12 and MDM34.

The protein localises to the mitochondrion outer membrane. Its function is as follows. Component of the ERMES/MDM complex, which serves as a molecular tether to connect the endoplasmic reticulum (ER) and mitochondria. Components of this complex are involved in the control of mitochondrial shape and protein biogenesis, and function in nonvesicular lipid trafficking between the ER and mitochondria. MDM34 is required for the interaction of the ER-resident membrane protein MMM1 and the outer mitochondrial membrane-resident beta-barrel protein MDM10. The polypeptide is Mitochondrial distribution and morphology protein 34 (Blastomyces gilchristii (strain SLH14081) (Blastomyces dermatitidis)).